Reading from the N-terminus, the 1034-residue chain is Platelet endothelial aggregation receptor 1 (1034 aa).

Positions 1 to 18 (MPLCPLLLLALGLRLTGT) are cleaved as a signal peptide. At 19 to 754 (LNSNDPNVCT…PTSPVTHNSL (736 aa)) the chain is on the extracellular side. The EMI domain occupies 23–101 (DPNVCTFWES…YYESRGACVP (79 aa)). Cystine bridges form between C27/C89, C53/C63, and C88/C99. N150 carries an N-linked (GlcNAc...) asparagine glycan. EGF-like domains are found at residues 181–215 (YGPACQFDCQCYGASCDPQDGACFCPPGRAGPSCN), 223–258 (DGFFCPRTYPCQNGGVPQGSQGSCSCPPGWMGVICS), 266–301 (HGPNCTQECRCHNGGLCDRFTGQCHCAPGYIGDRCQ), 309–344 (FGQDCAETCDCAPGARCFPANGACLCEHGFTGDRCT), and 398–433 (HGPGCQEHCLCLHGGLCLADSGLCRCAPGYTGPHCA). 5 disulfides stabilise this stretch: C185–C196, C189–C203, C205–C214, C233–C246, and C248–C257. N269 carries N-linked (GlcNAc...) asparagine glycosylation. 9 disulfides stabilise this stretch: C270-C282, C276-C289, C291-C300, C313-C325, C319-C332, C334-C343, C402-C414, C408-C421, and C423-C432. N474 carries an N-linked (GlcNAc...) asparagine glycan. EGF-like domains follow at residues 484–519 (WGFNCNASCQCAHDGVCSPQTGACTCTPGWHGAHCQ), 575–605 (SNTCTCKNGGTCVSENGNCVCAPGFRGPSCQ), 613–648 (YGKRCVQCKCNNNHSSCHPSDGTCSCLAGWTGPDCS), and 656–691 (WGLKCSQLCQCHHGGTCHPQDGSCICTPGWTGPNCL). 12 disulfides stabilise this stretch: C488–C500, C494–C507, C509–C518, C578–C586, C580–C593, C595–C604, C617–C629, C622–C636, C638–C647, C660–C672, C666–C679, and C681–C690. A helical membrane pass occupies residues 755–775 (GAVIGIAVLGTLVVALIALFI). Residues 776 to 1034 (GYRQWQKGKE…PSPPSRRQDR (259 aa)) are Cytoplasmic-facing. The interval 823-883 (TLSQCSPNPP…PHERGASHLD (61 aa)) is disordered. Basic and acidic residues predominate over residues 851 to 883 (RPSRAHGRENHVTLPADWKHRREPHERGASHLD). Y923 carries the phosphotyrosine modification. The disordered stretch occupies residues 925 to 1034 (TIRDLPSLPG…PSPPSRRQDR (110 aa)). S951 is subject to Phosphoserine. The segment covering 972-991 (DSGTYEQPSPLSHNEESLGS) has biased composition (polar residues). Position 1026 is a phosphoserine (S1026).

This sequence belongs to the MEGF family. In terms of assembly, interacts with SHC2 upon its aggregation-induced tyrosine phosphorylation. Interacts (via extracellular domain) with SVEP1. Post-translationally, phosphorylated in the intracellular domain on tyrosine residues. Phosphorylated on tyrosine residues by SRC. Tyrosine phosphorylation is detected upon platelet aggregation stimulated by collagen, TRAP and thrombin and platelet-platelet contacts but not after platelet activation. Tyrosine phosphorylation enhanced its association with SHC1 and SHC2. Phosphorylated in the intracellular domain on tyrosine residues. Phosphorylated when in the presence of SVEP1. Expressed in thymocytes, bone marrow stromal and osteogenic cells (at protein level). Strongly expressed in kidney and heart. Moderately expressed in lung, spleen, thymus, liver, brain, testis, skin and stomach. Expressed in hematopoietic stem progenitor cells.

The protein localises to the cell membrane. The protein resides in the cell projection. It localises to the lamellipodium. Functionally, required for SVEP1-mediated platelet activation, via its interaction with SVEP1 and subsequent activation of AKT/mTOR signaling. May be involved in the early stages of hematopoiesis. In Mus musculus (Mouse), this protein is Platelet endothelial aggregation receptor 1 (Pear1).